The following is a 347-amino-acid chain: Phosphoribosylformylglycinamidine cyclo-ligase (347 aa).

The protein belongs to the AIR synthase family.

The protein resides in the cytoplasm. The enzyme catalyses 2-formamido-N(1)-(5-O-phospho-beta-D-ribosyl)acetamidine + ATP = 5-amino-1-(5-phospho-beta-D-ribosyl)imidazole + ADP + phosphate + H(+). The protein operates within purine metabolism; IMP biosynthesis via de novo pathway; 5-amino-1-(5-phospho-D-ribosyl)imidazole from N(2)-formyl-N(1)-(5-phospho-D-ribosyl)glycinamide: step 2/2. This is Phosphoribosylformylglycinamidine cyclo-ligase from Prochlorococcus marinus (strain AS9601).